Consider the following 398-residue polypeptide: Autophagy-related protein 39 (398 aa).

Positions Trp8–Val11 match the ATG8-binding motif. The disordered stretch occupies residues Arg15 to Asp50. The ATG11-binding signature appears at Asp52–Ser59. The helical transmembrane segment at Val148–Leu164 threads the bilayer.

In terms of assembly, interacts with ATG8 and ATG11.

The protein localises to the endoplasmic reticulum membrane. It is found in the preautophagosomal structure membrane. Acts as a receptor for reticulophagy and nucleophagy. Directs autophagic sequestration of double-membrane vesicles derived from the nuclear envelope and perinuclear endoplasmic reticulum (pnER) into autophagosomes. Is not required for the cytoplasm-to-vacuole targeting pathway, mitophagy, pexophagy, and non-selective autophagy. This Saccharomyces cerevisiae (strain ATCC 204508 / S288c) (Baker's yeast) protein is Autophagy-related protein 39.